A 454-amino-acid chain; its full sequence is Bifunctional protein GlmU (454 aa).

The tract at residues 1–226 (MSTTVIILAA…AFEVEGVNDR (226 aa)) is pyrophosphorylase. Residues 8–11 (LAAG), lysine 22, glutamine 73, 78–79 (GT), 100–102 (YGD), glycine 137, glutamate 151, asparagine 166, and asparagine 224 contribute to the UDP-N-acetyl-alpha-D-glucosamine site. Residue aspartate 102 participates in Mg(2+) binding. Asparagine 224 is a binding site for Mg(2+). The interval 227–247 (LQLAALEREFQKQQAKELMQQ) is linker. Positions 248 to 454 (GVTFADPARF…NYQRPQKLKK (207 aa)) are N-acetyltransferase. UDP-N-acetyl-alpha-D-glucosamine contacts are provided by arginine 330 and lysine 348. The Proton acceptor role is filled by histidine 360. Residues tyrosine 363 and asparagine 374 each coordinate UDP-N-acetyl-alpha-D-glucosamine. Acetyl-CoA-binding positions include alanine 377, 383-384 (NY), serine 402, alanine 420, and arginine 437.

It in the N-terminal section; belongs to the N-acetylglucosamine-1-phosphate uridyltransferase family. This sequence in the C-terminal section; belongs to the transferase hexapeptide repeat family. Homotrimer. Mg(2+) is required as a cofactor.

The protein resides in the cytoplasm. The catalysed reaction is alpha-D-glucosamine 1-phosphate + acetyl-CoA = N-acetyl-alpha-D-glucosamine 1-phosphate + CoA + H(+). The enzyme catalyses N-acetyl-alpha-D-glucosamine 1-phosphate + UTP + H(+) = UDP-N-acetyl-alpha-D-glucosamine + diphosphate. It functions in the pathway nucleotide-sugar biosynthesis; UDP-N-acetyl-alpha-D-glucosamine biosynthesis; N-acetyl-alpha-D-glucosamine 1-phosphate from alpha-D-glucosamine 6-phosphate (route II): step 2/2. The protein operates within nucleotide-sugar biosynthesis; UDP-N-acetyl-alpha-D-glucosamine biosynthesis; UDP-N-acetyl-alpha-D-glucosamine from N-acetyl-alpha-D-glucosamine 1-phosphate: step 1/1. It participates in bacterial outer membrane biogenesis; LPS lipid A biosynthesis. Functionally, catalyzes the last two sequential reactions in the de novo biosynthetic pathway for UDP-N-acetylglucosamine (UDP-GlcNAc). The C-terminal domain catalyzes the transfer of acetyl group from acetyl coenzyme A to glucosamine-1-phosphate (GlcN-1-P) to produce N-acetylglucosamine-1-phosphate (GlcNAc-1-P), which is converted into UDP-GlcNAc by the transfer of uridine 5-monophosphate (from uridine 5-triphosphate), a reaction catalyzed by the N-terminal domain. The sequence is that of Bifunctional protein GlmU from Acinetobacter baumannii (strain ACICU).